A 99-amino-acid chain; its full sequence is Large ribosomal subunit protein bL28 (99 aa).

Belongs to the bacterial ribosomal protein bL28 family.

The chain is Large ribosomal subunit protein bL28 from Caulobacter vibrioides (strain ATCC 19089 / CIP 103742 / CB 15) (Caulobacter crescentus).